A 421-amino-acid polypeptide reads, in one-letter code: Aspartokinase (421 aa).

ATP is bound at residue 7 to 10 (KYGG). Residue 25–30 (RIVETK) coordinates substrate. Serine 41 provides a ligand contact to ATP. Residues 45–49 (DTTDD), glutamate 74, 125–126 (LD), 151–154 (RGGS), and serine 154 each bind substrate. ATP is bound by residues 174–175 (TD), 180–185 (FTADPR), and lysine 210. ACT domains follow at residues 267–348 (VTVV…GKVS) and 349–421 (LIGA…GTGR). Substrate contacts are provided by residues aspartate 274, 274-279 (DVPGYA), 292-294 (NID), glutamine 298, 360-361 (VT), 374-375 (NI), and 381-382 (SE).

Belongs to the aspartokinase family. As to quaternary structure, heterotetramer consisting of 2 isoforms Alpha (catalytic and regulation) and of a homodimer of 2 isoforms Beta (regulation).

The catalysed reaction is L-aspartate + ATP = 4-phospho-L-aspartate + ADP. It functions in the pathway amino-acid biosynthesis; L-lysine biosynthesis via DAP pathway; (S)-tetrahydrodipicolinate from L-aspartate: step 1/4. The protein operates within amino-acid biosynthesis; L-methionine biosynthesis via de novo pathway; L-homoserine from L-aspartate: step 1/3. Its pathway is amino-acid biosynthesis; L-threonine biosynthesis; L-threonine from L-aspartate: step 1/5. Its activity is regulated as follows. Feedback inhibition by lysine and threonine. Functionally, catalyzes the phosphorylation of the beta-carboxyl group of aspartic acid with ATP to yield 4-phospho-L-aspartate, which is involved in the branched biosynthetic pathway leading to the biosynthesis of amino acids lysine, threonine, isoleucine and methionine. The polypeptide is Aspartokinase (ask) (Mycolicibacterium smegmatis (Mycobacterium smegmatis)).